Here is a 492-residue protein sequence, read N- to C-terminus: Fibroblast growth factor receptor substrate 3 (492 aa).

Residue Gly-2 is the site of N-myristoyl glycine attachment. The IRS-type PTB domain maps to 13–115 (VPDNHPTKFK…QCNSINVMEE (103 aa)). Disordered regions lie at residues 153–173 (GEGPRFSAPRRLSTSSLRHPS), 338–455 (QLGG…SDSY), and 467–492 (SNLQRALPRDDGTARKTRHNSTDLPL).

As to quaternary structure, binds NTRK1. Binds FGFR1, NGFR, GRB2, PTPN11 and ERK2. In terms of processing, phosphorylated by ULK2 in vitro. Phosphorylated on tyrosine residues upon stimulation by BFGF or NGFB.

It is found in the membrane. Functionally, adapter protein that links FGF and NGF receptors to downstream signaling pathways. Involved in the activation of MAP kinases. Down-regulates ERK2 signaling by interfering with the phosphorylation and nuclear translocation of ERK2. This is Fibroblast growth factor receptor substrate 3 (FRS3) from Homo sapiens (Human).